Here is a 155-residue protein sequence, read N- to C-terminus: Small ribosomal subunit protein uS8m (155 aa).

It belongs to the universal ribosomal protein uS8 family. In terms of assembly, component of the mitochondrial small ribosomal subunit (mt-SSU). Mature yeast 74S mitochondrial ribosomes consist of a small (37S) and a large (54S) subunit. The 37S small subunit contains a 15S ribosomal RNA (15S mt-rRNA) and 34 different proteins. The 54S large subunit contains a 21S rRNA (21S mt-rRNA) and 46 different proteins.

It is found in the mitochondrion. In terms of biological role, component of the mitochondrial ribosome (mitoribosome), a dedicated translation machinery responsible for the synthesis of mitochondrial genome-encoded proteins, including at least some of the essential transmembrane subunits of the mitochondrial respiratory chain. The mitoribosomes are attached to the mitochondrial inner membrane and translation products are cotranslationally integrated into the membrane. In Saccharomyces cerevisiae (strain ATCC 204508 / S288c) (Baker's yeast), this protein is Small ribosomal subunit protein uS8m (MRPS8).